A 117-amino-acid chain; its full sequence is Large ribosomal subunit protein bL20 (117 aa).

The protein belongs to the bacterial ribosomal protein bL20 family.

Functionally, binds directly to 23S ribosomal RNA and is necessary for the in vitro assembly process of the 50S ribosomal subunit. It is not involved in the protein synthesizing functions of that subunit. This Lawsonia intracellularis (strain PHE/MN1-00) protein is Large ribosomal subunit protein bL20.